Reading from the N-terminus, the 231-residue chain is Orotidine 5'-phosphate decarboxylase (231 aa).

Substrate-binding positions include aspartate 11, lysine 33, 60-69 (DLKFHDIPNT), threonine 117, arginine 178, glutamine 187, glycine 207, and arginine 208. The active-site Proton donor is lysine 62.

Belongs to the OMP decarboxylase family. Type 1 subfamily. In terms of assembly, homodimer.

The catalysed reaction is orotidine 5'-phosphate + H(+) = UMP + CO2. Its pathway is pyrimidine metabolism; UMP biosynthesis via de novo pathway; UMP from orotate: step 2/2. Catalyzes the decarboxylation of orotidine 5'-monophosphate (OMP) to uridine 5'-monophosphate (UMP). The sequence is that of Orotidine 5'-phosphate decarboxylase from Nitrosomonas europaea (strain ATCC 19718 / CIP 103999 / KCTC 2705 / NBRC 14298).